Here is a 294-residue protein sequence, read N- to C-terminus: 4-diphosphocytidyl-2-C-methyl-D-erythritol kinase (294 aa).

Residue Lys23 is part of the active site. 106–116 (PMGGGLGGGSS) is a binding site for ATP. The active site involves Asp148.

This sequence belongs to the GHMP kinase family. IspE subfamily.

The enzyme catalyses 4-CDP-2-C-methyl-D-erythritol + ATP = 4-CDP-2-C-methyl-D-erythritol 2-phosphate + ADP + H(+). It participates in isoprenoid biosynthesis; isopentenyl diphosphate biosynthesis via DXP pathway; isopentenyl diphosphate from 1-deoxy-D-xylulose 5-phosphate: step 3/6. In terms of biological role, catalyzes the phosphorylation of the position 2 hydroxy group of 4-diphosphocytidyl-2C-methyl-D-erythritol. The chain is 4-diphosphocytidyl-2-C-methyl-D-erythritol kinase from Nitrosospira multiformis (strain ATCC 25196 / NCIMB 11849 / C 71).